The chain runs to 126 residues: Alpha-lactalbumin (126 aa).

Residues Arg-1–Cys-126 form the C-type lysozyme domain. Intrachain disulfides connect Cys-6–Cys-126, Cys-30–Cys-117, Cys-63–Cys-82, and Cys-78–Cys-96. N-linked (GlcNAc...) asparagine glycosylation is present at Asn-47. Ca(2+) is bound by residues Lys-84, Asp-87, Asp-89, Asp-92, and Asp-93.

Belongs to the glycosyl hydrolase 22 family. As to quaternary structure, lactose synthase (LS) is a heterodimer of a catalytic component, beta1,4-galactosyltransferase (beta4Gal-T1) and a regulatory component, alpha-lactalbumin (LA). In terms of tissue distribution, mammary gland specific. Secreted in milk.

Its subcellular location is the secreted. Its function is as follows. Regulatory subunit of lactose synthase, changes the substrate specificity of galactosyltransferase in the mammary gland making glucose a good acceptor substrate for this enzyme. This enables LS to synthesize lactose, the major carbohydrate component of milk. In other tissues, galactosyltransferase transfers galactose onto the N-acetylglucosamine of the oligosaccharide chains in glycoproteins. The chain is Alpha-lactalbumin (LALBA) from Ornithorhynchus anatinus (Duckbill platypus).